Here is a 204-residue protein sequence, read N- to C-terminus: Holliday junction resolvase RecU (204 aa).

Residues 1-24 form a disordered region; it reads MTIHYPNGQQPVQHYNTHNELPTP. The segment covering 7-24 has biased composition (polar residues); that stretch reads NGQQPVQHYNTHNELPTP. Residues Thr87, Asp89, Asp102, and Gln121 each coordinate Mg(2+).

It belongs to the RecU family. Requires Mg(2+) as cofactor.

It localises to the cytoplasm. It carries out the reaction Endonucleolytic cleavage at a junction such as a reciprocal single-stranded crossover between two homologous DNA duplexes (Holliday junction).. In terms of biological role, endonuclease that resolves Holliday junction intermediates in genetic recombination. Cleaves mobile four-strand junctions by introducing symmetrical nicks in paired strands. Promotes annealing of linear ssDNA with homologous dsDNA. Required for DNA repair, homologous recombination and chromosome segregation. This chain is Holliday junction resolvase RecU, found in Limosilactobacillus reuteri (strain DSM 20016) (Lactobacillus reuteri).